The following is a 382-amino-acid chain: D-galactonate dehydratase (382 aa).

A Mg(2+)-binding site is contributed by Asp183. His185 serves as the catalytic Proton donor. Mg(2+)-binding residues include Glu209 and Glu235. The active-site Proton acceptor is the His285.

The protein belongs to the mandelate racemase/muconate lactonizing enzyme family. GalD subfamily. It depends on Mg(2+) as a cofactor.

It carries out the reaction D-galactonate = 2-dehydro-3-deoxy-D-galactonate + H2O. Its pathway is carbohydrate acid metabolism; D-galactonate degradation; D-glyceraldehyde 3-phosphate and pyruvate from D-galactonate: step 1/3. Its function is as follows. Catalyzes the dehydration of D-galactonate to 2-keto-3-deoxy-D-galactonate. The chain is D-galactonate dehydratase from Verminephrobacter eiseniae (strain EF01-2).